Consider the following 564-residue polypeptide: MHYRFLRDSFVGRVTYHLSKHKYFAHPEEAKDYIVPEKYLADYKPTLADDTSINFEKEEIDNQGEPNSSQSSSSNNTIVDNNNNNDNDVDGDKIVVTWDGDDDPENPQNWPTLQKAFFIFQISFLTTSVYMGSAVYTPGIEELMHDFGIGRVVATLPLTLFVIGYGVGPLVFSPMSENAIFGRTSIYIITLFLFVILQIPTALVNNIAGLCILRFLGGFFASPCLATGGASVADVVKFWNLPVGLAAWSLGAVCGPSFGPFFGSILTVKASWRWTFWFMCIISGFSFVMLCFTLPETFGKTLLYRKAKRLRAITGNDRITSEGEVENSKMTSHELIIDTLWRPLEITVMEPVVLLINIYIAMVYSILYLFFEVFPIYFVGVKHFTLVELGTTYMSIVIGIVIAAFIYIPVIRQKFTKPILRQEQVFPEVFIPIAIVGGILLTSGLFIFGWSANRTTHWVGPLFGAATTASGAFLIFQTLFNFMGASFKPHYIASVFASNDLFRSVIASVFPLFGAPLFDNLATPEYPVAWGSSVLGFITLVMIAIPVLFYLNGPKLRARSKYAN.

Topologically, residues 1 to 115 (MHYRFLRDSF…NPQNWPTLQK (115 aa)) are cytoplasmic. A disordered region spans residues 60–101 (IDNQGEPNSSQSSSSNNTIVDNNNNNDNDVDGDKIVVTWDGD). Low complexity predominate over residues 67 to 86 (NSSQSSSSNNTIVDNNNNND). A helical transmembrane segment spans residues 116-136 (AFFIFQISFLTTSVYMGSAVY). The Extracellular portion of the chain corresponds to 137-151 (TPGIEELMHDFGIGR). Residues 152–172 (VVATLPLTLFVIGYGVGPLVF) form a helical membrane-spanning segment. The Cytoplasmic segment spans residues 173–183 (SPMSENAIFGR). A helical membrane pass occupies residues 184–204 (TSIYIITLFLFVILQIPTALV). Over 205–206 (NN) the chain is Extracellular. Residues 207-227 (IAGLCILRFLGGFFASPCLAT) traverse the membrane as a helical segment. Topologically, residues 228–242 (GGASVADVVKFWNLP) are cytoplasmic. A helical membrane pass occupies residues 243–263 (VGLAAWSLGAVCGPSFGPFFG). Residues 264–273 (SILTVKASWR) are Extracellular-facing. A helical transmembrane segment spans residues 274 to 294 (WTFWFMCIISGFSFVMLCFTL). At 295-350 (PETFGKTLLYRKAKRLRAITGNDRITSEGEVENSKMTSHELIIDTLWRPLEITVME) the chain is on the cytoplasmic side. A helical transmembrane segment spans residues 351 to 371 (PVVLLINIYIAMVYSILYLFF). Topologically, residues 372–390 (EVFPIYFVGVKHFTLVELG) are extracellular. The helical transmembrane segment at 391-411 (TTYMSIVIGIVIAAFIYIPVI) threads the bilayer. The Cytoplasmic portion of the chain corresponds to 412–428 (RQKFTKPILRQEQVFPE). A helical membrane pass occupies residues 429–449 (VFIPIAIVGGILLTSGLFIFG). Residues 450–455 (WSANRT) lie on the Extracellular side of the membrane. N-linked (GlcNAc...) asparagine glycosylation is present at N453. A helical transmembrane segment spans residues 456–476 (THWVGPLFGAATTASGAFLIF). Over 477-503 (QTLFNFMGASFKPHYIASVFASNDLFR) the chain is Cytoplasmic. Residues 504–524 (SVIASVFPLFGAPLFDNLATP) traverse the membrane as a helical segment. Residues 525 to 528 (EYPV) are Extracellular-facing. Residues 529 to 549 (AWGSSVLGFITLVMIAIPVLF) form a helical membrane-spanning segment. The Cytoplasmic portion of the chain corresponds to 550-564 (YLNGPKLRARSKYAN).

It belongs to the major facilitator superfamily. CAR1 family.

Its subcellular location is the cell membrane. Its function is as follows. Plasma membrane multidrug efflux pump that confers resistance to numerous chemicals including azoles such as fluconazole, voriconazole, and benztriazoles, as well as to benomyl, cycloheximide, methotrexate, 4-nitroquinoline-N-oxide, sulfometuron methyl, cerulenin, and brefeldin A. The protein is Multidrug resistance protein 1 of Candida albicans (strain SC5314 / ATCC MYA-2876) (Yeast).